The sequence spans 476 residues: tRNA(Ile)-lysidine synthase (476 aa).

Position 30–35 (30–35 (SGGPDS)) interacts with ATP.

The protein belongs to the tRNA(Ile)-lysidine synthase family.

It localises to the cytoplasm. It carries out the reaction cytidine(34) in tRNA(Ile2) + L-lysine + ATP = lysidine(34) in tRNA(Ile2) + AMP + diphosphate + H(+). Its function is as follows. Ligates lysine onto the cytidine present at position 34 of the AUA codon-specific tRNA(Ile) that contains the anticodon CAU, in an ATP-dependent manner. Cytidine is converted to lysidine, thus changing the amino acid specificity of the tRNA from methionine to isoleucine. This Bacillus thuringiensis subsp. konkukian (strain 97-27) protein is tRNA(Ile)-lysidine synthase.